We begin with the raw amino-acid sequence, 307 residues long: Elongation factor Ts (307 aa).

The involved in Mg(2+) ion dislocation from EF-Tu stretch occupies residues 79–82 (TDFV).

This sequence belongs to the EF-Ts family.

It localises to the cytoplasm. In terms of biological role, associates with the EF-Tu.GDP complex and induces the exchange of GDP to GTP. It remains bound to the aminoacyl-tRNA.EF-Tu.GTP complex up to the GTP hydrolysis stage on the ribosome. The sequence is that of Elongation factor Ts from Sinorhizobium fredii (strain NBRC 101917 / NGR234).